The sequence spans 107 residues: uncharacterized protein (107 aa).

The chain crosses the membrane as a helical span at residues 13–33; it reads VLIVTFLSSFIFIVWLPVALV.

The protein resides in the membrane. This is an uncharacterized protein from Saccharomyces cerevisiae (strain ATCC 204508 / S288c) (Baker's yeast).